A 365-amino-acid chain; its full sequence is MKVGNTLMAARAREGRTRVLIVDDSAMVRQALALGLSTDPRLEVVGTASGAEAARAQMAALKPDVVTLDLEMPQMDGLTFLRSYMESAPVPTVVISSLTRTSGETAMRAMEAGAVDIISKPSLGAGQGLPAIMRDVCARVWAAARARLAPPDGAAPAPVATGASEDWIHALGASTGGVQALSRILPFFPAQSPGLLVVQHMPEGFTAAFARRLDALCRMRVREAADGDLVLPGLVLIAPGGLRHMEIERAGGVCRVRLVAGAPVSYSRPSVDRMFLSLAAAAGPRVSAALLTGMGRDGAAGLLAIRRAGGRTFAQDEGSSAVFGMPLAARDLRAAEEILTLDDIPARMMLAAAADTRAPSLASND.

Positions 18 to 135 (RVLIVDDSAM…GQGLPAIMRD (118 aa)) constitute a Response regulatory domain. Position 69 is a 4-aspartylphosphate (Asp69). The region spanning 162–355 (GASEDWIHAL…ARMMLAAAAD (194 aa)) is the CheB-type methylesterase domain. Residues Ser174, His200, and Asp297 contribute to the active site.

Belongs to the CheB family. Phosphorylated by CheA. Phosphorylation of the N-terminal regulatory domain activates the methylesterase activity.

It localises to the cytoplasm. The enzyme catalyses [protein]-L-glutamate 5-O-methyl ester + H2O = L-glutamyl-[protein] + methanol + H(+). The catalysed reaction is L-glutaminyl-[protein] + H2O = L-glutamyl-[protein] + NH4(+). Functionally, involved in chemotaxis. Part of a chemotaxis signal transduction system that modulates chemotaxis in response to various stimuli. Catalyzes the demethylation of specific methylglutamate residues introduced into the chemoreceptors (methyl-accepting chemotaxis proteins or MCP) by CheR. Also mediates the irreversible deamidation of specific glutamine residues to glutamic acid. This is Protein-glutamate methylesterase/protein-glutamine glutaminase 2 from Cereibacter sphaeroides (strain ATCC 17023 / DSM 158 / JCM 6121 / CCUG 31486 / LMG 2827 / NBRC 12203 / NCIMB 8253 / ATH 2.4.1.) (Rhodobacter sphaeroides).